The chain runs to 430 residues: Serine/threonine transporter SstT (430 aa).

A run of 9 helical transmembrane segments spans residues 24–44, 47–67, 82–102, 144–164, 186–206, 223–243, 294–314, 320–340, and 361–381; these read IIVGLIIGTVLALTMPHVTWI, FGTLFVAALKAAAPILVFVLV, FGTVLFLYLFTTFLAAVVAVL, AIIDGNYICILMWACLFGLAM, VIRWVINLAPFGIMGLVFTNV, LLVGTMLLMVLVFGPLVIFIF, IPLGATINMNGAAITITIMAM, LGIQISLPAAILLSVVSALGA, and FGISNDIAMQVVGVGFIIGVI.

Belongs to the dicarboxylate/amino acid:cation symporter (DAACS) (TC 2.A.23) family.

It is found in the cell membrane. It carries out the reaction L-serine(in) + Na(+)(in) = L-serine(out) + Na(+)(out). It catalyses the reaction L-threonine(in) + Na(+)(in) = L-threonine(out) + Na(+)(out). Its function is as follows. Involved in the import of serine and threonine into the cell, with the concomitant import of sodium (symport system). The sequence is that of Serine/threonine transporter SstT from Bifidobacterium adolescentis (strain ATCC 15703 / DSM 20083 / NCTC 11814 / E194a).